The sequence spans 387 residues: Exodeoxyribonuclease 7 large subunit (387 aa).

The protein belongs to the XseA family. In terms of assembly, heterooligomer composed of large and small subunits.

It is found in the cytoplasm. The catalysed reaction is Exonucleolytic cleavage in either 5'- to 3'- or 3'- to 5'-direction to yield nucleoside 5'-phosphates.. Bidirectionally degrades single-stranded DNA into large acid-insoluble oligonucleotides, which are then degraded further into small acid-soluble oligonucleotides. This is Exodeoxyribonuclease 7 large subunit from Campylobacter jejuni (strain RM1221).